A 177-amino-acid chain; its full sequence is uncharacterized protein (177 aa).

Low complexity predominate over residues 100-115 (QVQPHQQTHQQSQQTH). The segment at 100-135 (QVQPHQQTHQQSQQTHNKTVANSGDPPPPPPSQPNK) is disordered. Residues 141-158 (WIVGMVIGVVVLYLLYRY) form a helical membrane-spanning segment.

The protein localises to the membrane. This is an uncharacterized protein from Aedes vexans (Inland floodwater mosquito).